The following is a 1218-amino-acid chain: NACHT, LRR and PYD domains-containing protein 1 allele 2 (1218 aa).

Positions 1-61 (MEESQSKQES…SLPGWSSTSK (61 aa)) are disordered. Residues 7–29 (KQESNTRVAQHGSQQDVDPTFQT) are compositionally biased toward polar residues. The region spanning 175–484 (QLVIIEGAAG…EFFAAMSYIL (310 aa)) is the NACHT domain. 181-188 (GAAGIGKS) lines the ATP pocket. LRR repeat units follow at residues 343–364 (KERN…LTLC), 673–693 (NLEE…RSLC), and 730–750 (RLAE…RQLC). Residues 799-815 (TMPTENTDGEESLTSSK) are compositionally biased toward polar residues. The segment at 799–842 (TMPTENTDGEESLTSSKQQQQQSGDKHMEPLGTDDDFWGPSGPV) is disordered. Positions 835–968 (FWGPSGPVST…HFAVLENPSF (134 aa)) are ZU5. Positions 835-1118 (FWGPSGPVST…LRPALPRMAS (284 aa)) constitute an FIIND domain. The segment at 969 to 1118 (SPMGVLLRMI…LRPALPRMAS (150 aa)) is UPA. Positions 1122–1211 (DAPALLHFVD…HLIMDLLEKS (90 aa)) constitute a CARD domain.

This sequence belongs to the NLRP family. In terms of assembly, interacts (via LRR repeats) with BCL2 and BCL2L1 (via the loop between motifs BH4 and BH3). Interacts with NOD2; this interaction is enhanced in the presence of muramyl dipeptide (MDP) and increases IL1B release. Interacts with EIF2AK2/PKR; this interaction requires EIF2AK2 activity, is accompanied by EIF2AK2 autophosphorylation and promotes inflammasome assembly in response to danger-associated signals. Interacts with MEFV; this interaction targets Nlrp1a to degradation by autophagy, hence preventing excessive IL1B- and IL18-mediated inflammation. Interacts with DPP9; leading to inhibit activation of the inflammasome. DPP9 acts via formation of a ternary complex, composed of a DPP9 homodimer, one full-length NLRP1 protein, and one cleaved C-terminus of Nlrp1a (NACHT, LRR and PYD domains-containing protein 1a, C-terminus). Interacts with DPP8; leading to inhibit activation of the inflammasome, probably via formation of a ternary complex with DPP8. As to quaternary structure, interacts with the C-terminal part of Nlrp1a (NACHT, LRR and PYD domains-containing protein 1a, C-terminus) in absence of pathogens and other damage-associated signals. Interacts with the N-terminal part of Nlrp1a (NACHT, LRR and PYD domains-containing protein 1a, N-terminus) in absence of pathogens and other damage-associated signals. Homomultimer; forms the Nlrp1a inflammasome polymeric complex, a filament composed of homopolymers of this form in response to pathogens and other damage-associated signals. The Nlrp1a inflammasome polymeric complex directly recruits pro-caspase-1 (proCASP1) independently of PYCARD/ASC. Interacts (via CARD domain) with CASP1 (via CARD domain); leading to CASP1 activation. In terms of processing, autocatalytically cleaved. Autocatalytic cleavage in FIIND region occurs constitutively, prior to activation signals, and is required for inflammasome activity (IL1B release), possibly by facilitating CASP1 binding. Both N- and C-terminal parts remain associated non-covalently. Post-translationally, (Microbial infection) Cleavage by B.anthracis lethal toxin (LT) endopeptidase promotes ubiquitination and degradation of the N-terminal part, releasing the cleaved C-terminal part of the protein (NACHT, LRR and PYD domains-containing protein 1a, C-terminus), which polymerizes and forms the Nlrp1a inflammasome. Ubiquitinated in response to pathogen-associated signals, leading to its degradation by the proteasome and subsequent release of the cleaved C-terminal part of the protein (NACHT, LRR and PYD domains-containing protein 1a, C-terminus), which polymerizes and forms the Nlrp1a inflammasome.

The protein resides in the cytoplasm. It localises to the cytosol. The protein localises to the nucleus. Its subcellular location is the inflammasome. Activated by cleavage by B.anthracis lethal toxin (LT) endopeptidase. Cleavage by LT promotes ubiquitination and degradation of the N-terminal part, releasing the cleaved C-terminal part of the protein (NACHT, LRR and PYD domains-containing protein 1a, C-terminus), which polymerizes and forms the Nlrp1a inflammasome. Nlrp1a inflammasome is inhibited by DPP8 and DPP9, which sequester the C-terminal fragment of Nlrp1a (NACHT, LRR and PYD domains-containing protein 1a, C-terminus) in a ternary complex, thereby preventing Nlrp1a oligomerization and activation. Nlrp1a inflammasome is weakly activated by Val-boroPro (Talabostat, PT-100), an inhibitor of dipeptidyl peptidases DPP8 and DPP9. Val-boroPro relieves inhibition of DPP8 and/or DPP9 by promoting disruption of the ternary complex, releasing its C-terminal part from autoinhibition. Weakly activated by Toxoplasma gondii. Its function is as follows. Acts as the sensor component of the Nlrp1a inflammasome, which mediates inflammasome activation in response to various pathogen-associated signals, leading to subsequent pyroptosis. Inflammasomes are supramolecular complexes that assemble in the cytosol in response to pathogens and other damage-associated signals and play critical roles in innate immunity and inflammation. Acts as a recognition receptor (PRR): recognizes specific pathogens and other damage-associated signals, such as B.anthracis lethal toxin (LT) or Val-boroPro inhibitor, and mediates the formation of the inflammasome polymeric complex. In response to pathogen-associated signals, the N-terminal part of Nlrp1a is degraded by the proteasome, releasing the cleaved C-terminal part of the protein (NACHT, LRR and PYD domains-containing protein 1a, C-terminus), which polymerizes to initiate the formation of the inflammasome complex: the inflammasome directly recruits pro-caspase-1 (proCASP1) independently of PYCARD/ASC and promotes caspase-1 (CASP1) activation, which subsequently cleaves and activates inflammatory cytokines IL1B and IL18 and gasdermin-D (GSDMD), leading to pyroptosis. In the absence of GSDMD expression, the Nlrp1a inflammasome is able to recruit and activate CASP8, leading to activation of gasdermin-E (GSDME). In terms of biological role, constitutes the precursor of the Nlrp1a inflammasome, which mediates autoproteolytic processing within the FIIND domain to generate the N-terminal and C-terminal parts, which are associated non-covalently in absence of pathogens and other damage-associated signals. Regulatory part that prevents formation of the Nlrp1a inflammasome: in absence of pathogens and other damage-associated signals, interacts with the C-terminal part of Nlrp1a (NACHT, LRR and PYD domains-containing protein 1a, C-terminus), preventing activation of the Nlrp1a inflammasome. In response to pathogen-associated signals, this part is ubiquitinated by the N-end rule pathway and degraded by the proteasome, releasing the cleaved C-terminal part of the protein, which polymerizes and forms the Nlrp1a inflammasome. Functionally, constitutes the active part of the Nlrp1a inflammasome. In absence of pathogens and other damage-associated signals, interacts with the N-terminal part of Nlrp1a (NACHT, LRR and PYD domains-containing protein 1a, N-terminus), preventing activation of the Nlrp1a inflammasome. In response to pathogen-associated signals, the N-terminal part of Nlrp1a is degraded by the proteasome, releasing this form, which polymerizes to form the Nlrp1a inflammasome complex: the Nlrp1a inflammasome complex then directly recruits pro-caspase-1 (proCASP1) and promotes caspase-1 (CASP1) activation, leading to gasdermin-D (GSDMD) cleavage and subsequent pyroptosis. In Rattus norvegicus (Rat), this protein is NACHT, LRR and PYD domains-containing protein 1 allele 2.